The primary structure comprises 306 residues: tRNA dimethylallyltransferase 1 (306 aa).

Position 15–22 (15–22) interacts with ATP; the sequence is GPTGSGKS. Residue 17–22 participates in substrate binding; that stretch reads TGSGKS. An interaction with substrate tRNA region spans residues 40–43; it reads DSMQ.

This sequence belongs to the IPP transferase family. Monomer. Mg(2+) serves as cofactor.

The enzyme catalyses adenosine(37) in tRNA + dimethylallyl diphosphate = N(6)-dimethylallyladenosine(37) in tRNA + diphosphate. Its function is as follows. Catalyzes the transfer of a dimethylallyl group onto the adenine at position 37 in tRNAs that read codons beginning with uridine, leading to the formation of N6-(dimethylallyl)adenosine (i(6)A). The protein is tRNA dimethylallyltransferase 1 of Citrifermentans bemidjiense (strain ATCC BAA-1014 / DSM 16622 / JCM 12645 / Bem) (Geobacter bemidjiensis).